Consider the following 423-residue polypeptide: uncharacterized protein (423 aa).

Residues 383-423 form a disordered region; sequence ARGTTGGGGTRSGTSTDGQEDGRKPPVVVIREQPPPGNPPR.

The protein belongs to the mycobacterial PPE family.

This is an uncharacterized protein from Mycobacterium tuberculosis (strain CDC 1551 / Oshkosh).